Consider the following 435-residue polypeptide: Fibrous sheath-interacting protein 1 (435 aa).

Disordered stretches follow at residues 1–109 (MPMD…DPKL) and 354–393 (SQSH…ESRL). Residues 18–32 (SSSRSRPGSRSSNGS) show a composition bias toward low complexity. Positions 50–63 (KLNSGQEGHTSNSG) are enriched in polar residues. Residues 64-87 (VEERRNSNDAKWADDSKTKPAKES) show a composition bias toward basic and acidic residues. Phosphoserine is present on residues serine 87 and serine 88. Positions 108-154 (KLEETNAVLQNAIRKMHRLDKLLAKKQCREKEVKKQGLEMRVKLWEE) form a coiled coil. Basic and acidic residues-rich tracts occupy residues 355–371 (QSHK…ERNT) and 378–393 (KILR…ESRL).

It belongs to the FSIP1 family. May interact with AKAP4. As to expression, detected in male germ cells and testis.

The protein is Fibrous sheath-interacting protein 1 (Fsip1) of Mus musculus (Mouse).